Here is a 50-residue protein sequence, read N- to C-terminus: Insulin-1 (50 aa).

Cystine bridges form between Cys-7/Cys-36, Cys-19/Cys-49, and Cys-35/Cys-40.

This sequence belongs to the insulin family. In terms of assembly, heterodimer of a B chain and an A chain linked by two disulfide bonds.

It is found in the secreted. In terms of biological role, insulin decreases blood glucose concentration. It increases cell permeability to monosaccharides, amino acids and fatty acids. It accelerates glycolysis, the pentose phosphate cycle, and glycogen synthesis in liver. This is Insulin-1 from Thunnus orientalis (North Pacific bluefin tuna).